A 287-amino-acid polypeptide reads, in one-letter code: CRISPR-associated endoribonuclease Cas6 1 (287 aa).

It belongs to the CRISPR-associated endoribonuclease Cas6 family. Part of the aCascade ribonucleoprotein complex, minimally composed of Csa2 and Cas5a, which binds crRNA. Other possible components of aCascade in strain P1 are Cas6b (SSO1437) and Csa5 (SSO1443), while SSO1399, Cas5b (SSO1400) and SSO1401 have sometimes been seen weakly associated. Csa2 is probably the major RNA-binding subunit. The Csa2-Cas5a-crRNA complex also binds target DNA homologous to crRNA, probably forming an R-loop. Purified aCascade forms a filament about 6 nm in width.

In terms of biological role, CRISPR (clustered regularly interspaced short palindromic repeat) is an adaptive immune system that provides protection against mobile genetic elements (viruses, transposable elements and conjugative plasmids). CRISPR clusters contain spacers, sequences complementary to antecedent mobile elements, and target invading nucleic acids. CRISPR clusters are transcribed and processed into CRISPR RNA (crRNA). The chain is CRISPR-associated endoribonuclease Cas6 1 (cas6a) from Saccharolobus solfataricus (strain ATCC 35092 / DSM 1617 / JCM 11322 / P2) (Sulfolobus solfataricus).